We begin with the raw amino-acid sequence, 580 residues long: FAD-dependent monooxygenase DEP4 (580 aa).

Position 47-50 (47-50 (VWSK)) interacts with FAD. NADP(+) is bound at residue 58–60 (FAQ). Residue Val-112 coordinates FAD. NADP(+)-binding positions include 186–205 (VGRS…AGKK), 222–223 (AP), and 354–355 (DI). An FAD-binding site is contributed by Met-473.

The protein belongs to the FAD-binding monooxygenase family. FAD serves as cofactor.

The protein operates within polyketide biosynthesis. In terms of biological role, part of the gene cluster that mediates the biosynthesis of depudecin, a highly oxidized eleven-carbon linear polyketide that acts as a histone deacetylase (HDAC) inhibitor and makes a small contribution to pathogenesis. The reducing polyketide synthase DEP5 is the central enzyme in depudecin biosynthesis by yielding the backbone polyketide chain. The monooxygenases DEP2 and DEP4, as well as the uncharacterized protein DEP1, then act as tailoring enzymes to modify the intermediate polyketide chain into depudecin. The sequence is that of FAD-dependent monooxygenase DEP4 from Fusarium langsethiae.